Here is a 188-residue protein sequence, read N- to C-terminus: Elongation factor P (188 aa).

It belongs to the elongation factor P family.

The protein resides in the cytoplasm. The protein operates within protein biosynthesis; polypeptide chain elongation. Involved in peptide bond synthesis. Stimulates efficient translation and peptide-bond synthesis on native or reconstituted 70S ribosomes in vitro. Probably functions indirectly by altering the affinity of the ribosome for aminoacyl-tRNA, thus increasing their reactivity as acceptors for peptidyl transferase. This Sulfurimonas denitrificans (strain ATCC 33889 / DSM 1251) (Thiomicrospira denitrificans (strain ATCC 33889 / DSM 1251)) protein is Elongation factor P.